Reading from the N-terminus, the 337-residue chain is MISLKSIVDKLYNLEDLSYQESYQLFDYFIKGQIELPLQTSILTALKLKKETSIEIAAAVEALFDNTKEFPKIKGDLAGIVGTGGDGFNTINISTTAAIVAATAGYKVAKHGGRSVSSKSGSFDLLESFGVNIELAPDQTKQCLELYNLGFLFVPFYSDGFRHIKEARTILKTRTIFNILGPLINPARPNKVVIGVYSKDLILPMAKTLVNLGIDRAVVVYGSGLDEVAIHDDTYVAEIQNNQIIEYKVSPVDFGIDTYAIKDLEGGLPEQNREIIKQILLGKGKEAHNAAVAVNVAMLMKLYDKDDLKQNTQEVLEIIKSGKCFNILQQVINYSNK.

5-phospho-alpha-D-ribose 1-diphosphate contacts are provided by residues G82, 85–86, T90, 92–95, 110–118, and S122; these read GD, NIST, and KHGGRSVSS. G82 is a binding site for anthranilate. Residue S94 participates in Mg(2+) binding. R168 contacts anthranilate. Mg(2+) contacts are provided by D226 and E227.

It belongs to the anthranilate phosphoribosyltransferase family. In terms of assembly, homodimer. Mg(2+) serves as cofactor.

The enzyme catalyses N-(5-phospho-beta-D-ribosyl)anthranilate + diphosphate = 5-phospho-alpha-D-ribose 1-diphosphate + anthranilate. It functions in the pathway amino-acid biosynthesis; L-tryptophan biosynthesis; L-tryptophan from chorismate: step 2/5. Catalyzes the transfer of the phosphoribosyl group of 5-phosphorylribose-1-pyrophosphate (PRPP) to anthranilate to yield N-(5'-phosphoribosyl)-anthranilate (PRA). This Francisella tularensis subsp. tularensis (strain WY96-3418) protein is Anthranilate phosphoribosyltransferase.